The sequence spans 539 residues: Glucose-6-phosphate isomerase (539 aa).

Glu353 functions as the Proton donor in the catalytic mechanism. Residues His384 and Lys505 contribute to the active site.

It belongs to the GPI family.

The protein resides in the cytoplasm. The catalysed reaction is alpha-D-glucose 6-phosphate = beta-D-fructose 6-phosphate. Its pathway is carbohydrate biosynthesis; gluconeogenesis. It functions in the pathway carbohydrate degradation; glycolysis; D-glyceraldehyde 3-phosphate and glycerone phosphate from D-glucose: step 2/4. Catalyzes the reversible isomerization of glucose-6-phosphate to fructose-6-phosphate. The polypeptide is Glucose-6-phosphate isomerase (Ralstonia nicotianae (strain ATCC BAA-1114 / GMI1000) (Ralstonia solanacearum)).